We begin with the raw amino-acid sequence, 270 residues long: MSRLQTRFAQLKEQNRAALVTFVTAGDPNYDTSLAILKGLPAAGADVIELGMPFTDPMADGPAIQLANIRALGAKQNLAKTLQMVREFREGNSDTPLVLMGYFNPIHHYGVPRFIADAKAAGVDGLIVVDMPPEHNSELCDPAQAAGIDFIRLTTPTTDDARLPKVLDGSSGFVYYVSVAGVTGAGAATLEHVEEAVARLRRHTDLPISIGFGIRTPEQAAAIARLADGVVVGSALIDHIASAESSEQAVDGVLSLCAALSEGVRKARVS.

Active-site proton acceptor residues include glutamate 49 and aspartate 60.

This sequence belongs to the TrpA family. As to quaternary structure, tetramer of two alpha and two beta chains.

It carries out the reaction (1S,2R)-1-C-(indol-3-yl)glycerol 3-phosphate + L-serine = D-glyceraldehyde 3-phosphate + L-tryptophan + H2O. Its pathway is amino-acid biosynthesis; L-tryptophan biosynthesis; L-tryptophan from chorismate: step 5/5. Functionally, the alpha subunit is responsible for the aldol cleavage of indoleglycerol phosphate to indole and glyceraldehyde 3-phosphate. This is Tryptophan synthase alpha chain from Pseudomonas fluorescens (strain ATCC BAA-477 / NRRL B-23932 / Pf-5).